A 286-amino-acid polypeptide reads, in one-letter code: Polyamine aminopropyltransferase (286 aa).

One can recognise a PABS domain in the interval 5–238 (TMWHETLHDQ…GIMTFAWATD (234 aa)). Residue Q33 participates in S-methyl-5'-thioadenosine binding. H64 and D88 together coordinate spermidine. Residues E108 and 140 to 141 (DG) each bind S-methyl-5'-thioadenosine. D158 (proton acceptor) is an active-site residue. Residue 158-161 (DCTD) coordinates spermidine. P165 contributes to the S-methyl-5'-thioadenosine binding site.

Belongs to the spermidine/spermine synthase family. Homodimer or homotetramer.

The protein localises to the cytoplasm. The catalysed reaction is S-adenosyl 3-(methylsulfanyl)propylamine + putrescine = S-methyl-5'-thioadenosine + spermidine + H(+). It functions in the pathway amine and polyamine biosynthesis; spermidine biosynthesis; spermidine from putrescine: step 1/1. In terms of biological role, catalyzes the irreversible transfer of a propylamine group from the amino donor S-adenosylmethioninamine (decarboxy-AdoMet) to putrescine (1,4-diaminobutane) to yield spermidine. The protein is Polyamine aminopropyltransferase of Salmonella arizonae (strain ATCC BAA-731 / CDC346-86 / RSK2980).